We begin with the raw amino-acid sequence, 248 residues long: Ubiquinone/menaquinone biosynthesis C-methyltransferase UbiE (248 aa).

S-adenosyl-L-methionine is bound by residues serine 68 and aspartate 92.

The protein belongs to the class I-like SAM-binding methyltransferase superfamily. MenG/UbiE family.

The catalysed reaction is a 2-demethylmenaquinol + S-adenosyl-L-methionine = a menaquinol + S-adenosyl-L-homocysteine + H(+). The enzyme catalyses a 2-methoxy-6-(all-trans-polyprenyl)benzene-1,4-diol + S-adenosyl-L-methionine = a 5-methoxy-2-methyl-3-(all-trans-polyprenyl)benzene-1,4-diol + S-adenosyl-L-homocysteine + H(+). It participates in quinol/quinone metabolism; menaquinone biosynthesis; menaquinol from 1,4-dihydroxy-2-naphthoate: step 2/2. The protein operates within cofactor biosynthesis; ubiquinone biosynthesis. Its function is as follows. Methyltransferase required for the conversion of demethylmenaquinol (DMKH2) to menaquinol (MKH2) and the conversion of 2-polyprenyl-6-methoxy-1,4-benzoquinol (DDMQH2) to 2-polyprenyl-3-methyl-6-methoxy-1,4-benzoquinol (DMQH2). This is Ubiquinone/menaquinone biosynthesis C-methyltransferase UbiE from Rickettsia felis (strain ATCC VR-1525 / URRWXCal2) (Rickettsia azadi).